Reading from the N-terminus, the 405-residue chain is Phosphoglycerate kinase (405 aa).

Substrate contacts are provided by residues 24–26 (DFN), Arg40, 63–66 (HLGR), Arg122, and Arg162. ATP contacts are provided by residues Lys212, Glu331, and 361-364 (GGDS).

The protein belongs to the phosphoglycerate kinase family. Monomer.

It is found in the cytoplasm. It carries out the reaction (2R)-3-phosphoglycerate + ATP = (2R)-3-phospho-glyceroyl phosphate + ADP. It functions in the pathway carbohydrate degradation; glycolysis; pyruvate from D-glyceraldehyde 3-phosphate: step 2/5. This chain is Phosphoglycerate kinase, found in Corynebacterium efficiens (strain DSM 44549 / YS-314 / AJ 12310 / JCM 11189 / NBRC 100395).